A 616-amino-acid chain; its full sequence is UvrABC system protein C (616 aa).

The region spanning 21–99 is the GIY-YIG domain; that stretch reads HQPGVYRMYD…IKLYLPKYNV (79 aa). Residues 209–244 form the UVR domain; it reads RQVIASLVEKMEQASQSLNFEQAATFRDQIQALRRV.

The protein belongs to the UvrC family. As to quaternary structure, interacts with UvrB in an incision complex.

The protein localises to the cytoplasm. Its function is as follows. The UvrABC repair system catalyzes the recognition and processing of DNA lesions. UvrC both incises the 5' and 3' sides of the lesion. The N-terminal half is responsible for the 3' incision and the C-terminal half is responsible for the 5' incision. The polypeptide is UvrABC system protein C (Photobacterium profundum (strain SS9)).